Consider the following 56-residue polypeptide: uncharacterized protein (56 aa).

This is an uncharacterized protein from Borreliella burgdorferi (strain ATCC 35210 / DSM 4680 / CIP 102532 / B31) (Borrelia burgdorferi).